Reading from the N-terminus, the 466-residue chain is Probable multidrug resistance protein NorM (466 aa).

Helical transmembrane passes span 68–90 (AHTV…SPLV), 110–132 (LWVA…HILI), 142–164 (ALAQ…FIAL), 177–199 (PLWI…IHGL), 209–231 (GAGL…IAAW), 251–273 (LVRQ…YGLF), 288–310 (LAAH…GIGM), 331–353 (AGLV…IILG), 368–387 (SAAT…TFFI), 407–429 (MTLA…VLAF), and 433–455 (LGAV…LLVL).

Belongs to the multi antimicrobial extrusion (MATE) (TC 2.A.66.1) family.

It localises to the cell inner membrane. In terms of biological role, multidrug efflux pump. This Bradyrhizobium diazoefficiens (strain JCM 10833 / BCRC 13528 / IAM 13628 / NBRC 14792 / USDA 110) protein is Probable multidrug resistance protein NorM (norM).